The primary structure comprises 207 residues: Cytochrome c oxidase subunit 3 (207 aa).

5 consecutive transmembrane segments (helical) span residues phenylalanine 30 to alanine 50, valine 67 to alanine 87, leucine 101 to phenylalanine 121, leucine 144 to isoleucine 164, and tryptophan 186 to valine 206.

It belongs to the cytochrome c oxidase subunit 3 family.

The protein resides in the cell membrane. The catalysed reaction is 4 Fe(II)-[cytochrome c] + O2 + 8 H(+)(in) = 4 Fe(III)-[cytochrome c] + 2 H2O + 4 H(+)(out). The sequence is that of Cytochrome c oxidase subunit 3 (ctaE) from Bacillus subtilis (strain 168).